Reading from the N-terminus, the 328-residue chain is tRNA uridine(34) hydroxylase (328 aa).

Positions 130-224 constitute a Rhodanese domain; that stretch reads LDEDTVVLDT…YGKDPEVQGE (95 aa). Cysteine 184 functions as the Cysteine persulfide intermediate in the catalytic mechanism.

The protein belongs to the TrhO family.

It catalyses the reaction uridine(34) in tRNA + AH2 + O2 = 5-hydroxyuridine(34) in tRNA + A + H2O. In terms of biological role, catalyzes oxygen-dependent 5-hydroxyuridine (ho5U) modification at position 34 in tRNAs. The polypeptide is tRNA uridine(34) hydroxylase (Streptococcus pyogenes serotype M3 (strain SSI-1)).